A 463-amino-acid polypeptide reads, in one-letter code: tRNA dimethylallyltransferase 9 (463 aa).

Position 57–64 (57–64 (GPTGAGKS)) interacts with ATP. A substrate-binding site is contributed by 59–64 (TGAGKS). Residues 82 to 85 (DSVQ) are interaction with substrate tRNA.

It belongs to the IPP transferase family. Mg(2+) serves as cofactor. As to expression, expressed ubiquitously, with highest expression in proliferating tissues.

It is found in the cytoplasm. It carries out the reaction adenosine(37) in tRNA + dimethylallyl diphosphate = N(6)-dimethylallyladenosine(37) in tRNA + diphosphate. Catalyzes the transfer of a dimethylallyl group onto the adenine at position 37 in tRNAs that read codons beginning with uridine, leading to the formation of N6-(dimethylallyl)adenosine (i(6)A). Involved in the cis-type cytokinin biosynthesis. This is tRNA dimethylallyltransferase 9 (IPT9) from Arabidopsis thaliana (Mouse-ear cress).